The following is a 378-amino-acid chain: Pre-B-cell leukemia transcription factor 4 (378 aa).

A compositionally biased stretch (pro residues) spans 1–15; the sequence is MAAPLRPVPPQPAPR. Disordered regions lie at residues 1–24 and 100–125; these read MAAP…APLG and VSRP…PNDN. The PBC domain maps to 22 to 214; that stretch reads PLGHDTSDVL…VMTLRSRFLD (193 aa). The tract at residues 29–107 is PBC-A; sequence DVLQQIMAIT…EGVSRPEKRG (79 aa). Low complexity predominate over residues 109–120; that stretch reads GAAAGSTATPGG. Residues 110-214 are PBC-B; it reads AAAGSTATPG…VMTLRSRFLD (105 aa). A DNA-binding region (homeobox; TALE-type) is located at residues 215 to 277; sequence ARRKRRNFSK…NKRIRYKKNT (63 aa). Disordered stretches follow at residues 291-320 and 355-378; these read ASTV…PLPL and RAAP…AASN. Low complexity predominate over residues 356 to 370; the sequence is AAPQPASSPAGESGS.

It belongs to the TALE/PBX homeobox family. As to expression, almost exclusively expressed in testis.

The protein resides in the nucleus. The polypeptide is Pre-B-cell leukemia transcription factor 4 (Pbx4) (Mus musculus (Mouse)).